The following is a 432-amino-acid chain: Type I restriction enzyme MjaIX specificity subunit (432 aa).

It belongs to the type-I restriction system S methylase family. In terms of assembly, the type I restriction/modification system is composed of three polypeptides R, M and S.

In terms of biological role, the specificity (S) subunit of a type I restriction enzyme; this subunit dictates DNA sequence specificity. The M and S subunits together form a methyltransferase (MTase) that methylates A-3 on the top and A-2 on the bottom strand of the sequence 5'-CCAN(5)GTR-3'. In the presence of the R subunit the complex can also act as an endonuclease, binding to the same target sequence but cutting the DNA some distance from this site. Whether the DNA is cut or modified depends on the methylation state of the target sequence. When the target site is unmodified, the DNA is cut. When the target site is hemimethylated, the complex acts as a maintenance MTase modifying the DNA so that both strands become methylated. After locating a non-methylated recognition site, the enzyme complex serves as a molecular motor that translocates DNA in an ATP-dependent manner until a collision occurs that triggers cleavage. This is Type I restriction enzyme MjaIX specificity subunit (hsdS) from Methanocaldococcus jannaschii (strain ATCC 43067 / DSM 2661 / JAL-1 / JCM 10045 / NBRC 100440) (Methanococcus jannaschii).